The chain runs to 607 residues: Major facilitator superfamily multidrug transporter mdrA (607 aa).

12 consecutive transmembrane segments (helical) span residues 77–97 (MTVA…TGGV), 110–130 (VATL…LLWA), 139–159 (QIIF…SAGA), 170–190 (FFAG…IADM), 202–222 (LFAA…GFLG), 229–249 (WVMG…TIFV), 305–325 (PIVF…YMLF), 342–362 (VSSL…TYSV), 385–405 (LPPT…FAWT), 413–433 (IVCI…FLGI), 443–463 (IFAA…GAVF), and 478–498 (WASS…FLFY). Residues 523-583 (EQMKQAPEPE…ASTRTASSLR (61 aa)) form a disordered region. The segment covering 553 to 564 (DVSETESNVEEL) has biased composition (acidic residues). Positions 572–583 (SRASTRTASSLR) are enriched in low complexity.

It belongs to the major facilitator superfamily. DHA1 family. Polyamines/proton antiporter (TC 2.A.1.2.16) subfamily.

It localises to the cell membrane. Functionally, MFS transporter involved in the basal level of azole susceptibility. Confers resistance to voriconazole and, to a lesser extent, to fluconazole. The sequence is that of Major facilitator superfamily multidrug transporter mdrA from Aspergillus fumigatus (strain ATCC MYA-4609 / CBS 101355 / FGSC A1100 / Af293) (Neosartorya fumigata).